A 450-amino-acid polypeptide reads, in one-letter code: ATP-dependent protease ATPase subunit HslU (450 aa).

ATP is bound by residues valine 29, 71–76 (GVGKTE), aspartate 261, glutamate 328, and arginine 400.

It belongs to the ClpX chaperone family. HslU subfamily. A double ring-shaped homohexamer of HslV is capped on each side by a ring-shaped HslU homohexamer. The assembly of the HslU/HslV complex is dependent on binding of ATP.

The protein resides in the cytoplasm. In terms of biological role, ATPase subunit of a proteasome-like degradation complex; this subunit has chaperone activity. The binding of ATP and its subsequent hydrolysis by HslU are essential for unfolding of protein substrates subsequently hydrolyzed by HslV. HslU recognizes the N-terminal part of its protein substrates and unfolds these before they are guided to HslV for hydrolysis. The chain is ATP-dependent protease ATPase subunit HslU from Rickettsia canadensis (strain McKiel).